The following is a 578-amino-acid chain: Hyaluronan synthase 1 (578 aa).

Residues 1 to 25 lie on the Cytoplasmic side of the membrane; it reads MRQQDAPKPTPAACRCSGLARRVLT. A helical membrane pass occupies residues 26 to 46; the sequence is IAFALLILGLMTWAYAAGVPL. Residues 47–52 lie on the Extracellular side of the membrane; the sequence is ASDRYG. The helical transmembrane segment at 53 to 73 threads the bilayer; sequence LLAFGLYGAFLSAHLVAQSLF. Residues 74-399 are Cytoplasmic-facing; sequence AYLEHRRVAA…NALWWHRHHA (326 aa). The chain crosses the membrane as a helical span at residues 400 to 420; that stretch reads WMTYEAVVSGLFPFFVAATVL. Topologically, residues 421 to 430 are extracellular; the sequence is RLFYAGRPWA. The helical transmembrane segment at 431–451 threads the bilayer; it reads LLWVLLCVQGVALAKAAFAAW. Residues 452–457 lie on the Cytoplasmic side of the membrane; it reads LRGCLR. The helical transmembrane segment at 458-478 threads the bilayer; sequence MVLLSLYAPLYMCGLLPAKFL. Residues 479-497 are Extracellular-facing; sequence ALVTMNQSGWGTSGRRKLA. Residues 498–518 traverse the membrane as a helical segment; it reads ANYVPLLPLALWALLLLGGLV. Over 519–540 the chain is Cytoplasmic; that stretch reads RSVAHEARADWSGPSRAAEAYH. A helical transmembrane segment spans residues 541–561; the sequence is LAAGAGAYVGYWVAMLTLYWV. Over 562–578 the chain is Extracellular; sequence GVRRLCRRRTGGYRVQV.

The protein belongs to the NodC/HAS family. Mg(2+) serves as cofactor. Widely expressed. Highly expressed in ovary followed by spleen, thymus, prostate, testes and large intestine. Weakly expressed in small intestine.

Its subcellular location is the membrane. It catalyses the reaction [hyaluronan](n) + UDP-N-acetyl-alpha-D-glucosamine = N-acetyl-beta-D-glucosaminyl-(1-&gt;4)-[hyaluronan](n) + UDP + H(+). It carries out the reaction N-acetyl-beta-D-glucosaminyl-(1-&gt;4)-[hyaluronan](n) + UDP-alpha-D-glucuronate = [hyaluronan](n+1) + UDP + H(+). The protein operates within glycan biosynthesis; hyaluronan biosynthesis. Functionally, catalyzes the addition of GlcNAc or GlcUA monosaccharides to the nascent hyaluronan polymer. Therefore, it is essential to hyaluronan synthesis a major component of most extracellular matrices that has a structural role in tissues architectures and regulates cell adhesion, migration and differentiation. This is one of the isozymes catalyzing that reaction. Also able to catalyze the synthesis of chito-oligosaccharide depending on the substrate. This chain is Hyaluronan synthase 1 (HAS1), found in Homo sapiens (Human).